Consider the following 237-residue polypeptide: Probable GTP-binding protein EngB (237 aa).

The EngB-type G domain occupies 13–188 (TGYEIAFAGR…ASVMAGRLNY (176 aa)). Residues 21 to 28 (GRSNAGKS), 48 to 52 (GRTQM), 67 to 70 (DLPG), 134 to 137 (TKAD), and 167 to 169 (FSS) each bind GTP. Residues serine 28 and threonine 50 each contribute to the Mg(2+) site. Acidic residues predominate over residues 207 to 220 (DDLNDELMDQDETS). A disordered region spans residues 207–237 (DDLNDELMDQDETSEFNTENIDDHLDQEPKI). Positions 227–237 (IDDHLDQEPKI) are enriched in basic and acidic residues.

Belongs to the TRAFAC class TrmE-Era-EngA-EngB-Septin-like GTPase superfamily. EngB GTPase family. Mg(2+) serves as cofactor.

Functionally, necessary for normal cell division and for the maintenance of normal septation. The protein is Probable GTP-binding protein EngB of Acinetobacter baylyi (strain ATCC 33305 / BD413 / ADP1).